Consider the following 47-residue polypeptide: Photosystem II reaction center protein K (47 aa).

A propeptide spanning residues 1 to 10 (MAAFSLDLLA) is cleaved from the precursor. Residues 19–39 (FGPLIDILPIIPVFFLLLAFV) form a helical membrane-spanning segment.

Belongs to the PsbK family. PSII is composed of 1 copy each of membrane proteins PsbA, PsbB, PsbC, PsbD, PsbE, PsbF, PsbH, PsbI, PsbJ, PsbK, PsbL, PsbM, PsbT, PsbX, PsbY, PsbZ, Psb30/Ycf12, peripheral proteins PsbO, CyanoQ (PsbQ), PsbU, PsbV and a large number of cofactors. It forms dimeric complexes.

It is found in the cellular thylakoid membrane. Its function is as follows. One of the components of the core complex of photosystem II (PSII). PSII is a light-driven water:plastoquinone oxidoreductase that uses light energy to abstract electrons from H(2)O, generating O(2) and a proton gradient subsequently used for ATP formation. It consists of a core antenna complex that captures photons, and an electron transfer chain that converts photonic excitation into a charge separation. This Synechococcus sp. (strain WH7803) protein is Photosystem II reaction center protein K.